Consider the following 198-residue polypeptide: Synaptobrevin homolog YKT6-B (198 aa).

The Longin domain occupies 8–127 (VLYKGENKVH…IQYNALDSYL (120 aa)). Residues 138 to 198 (PMSKVQAELD…RKQNSCCDIM (61 aa)) form the v-SNARE coiled-coil homology domain. Cys194 carries the S-palmitoyl cysteine lipid modification. At Cys195 the chain carries Cysteine methyl ester. Cys195 carries S-farnesyl cysteine lipidation. Positions 196–198 (DIM) are cleaved as a propeptide — removed in mature form.

This sequence belongs to the synaptobrevin family. In terms of processing, palmitoylated; catalyzes its own palmitoylation. Palmitoylation is required for Golgi targeting. Farnesylation is required for Golgi targeting.

The protein localises to the cytoplasm. Its subcellular location is the cytosol. It is found in the cytoplasmic vesicle membrane. It localises to the golgi apparatus membrane. Vesicular soluble NSF attachment protein receptor (v-SNARE) mediating vesicle docking and fusion to a specific acceptor cellular compartment. Functions in endoplasmic reticulum to Golgi transport; as part of a SNARE complex composed of GOSR1, GOSR2 and STX5. Functions in early/recycling endosome to TGN transport; as part of a SNARE complex composed of BET1L, GOSR1 and STX5. Has a S-palmitoyl transferase activity. The protein is Synaptobrevin homolog YKT6-B (ykt6-b) of Xenopus laevis (African clawed frog).